Here is a 1086-residue protein sequence, read N- to C-terminus: DNA polymerase delta catalytic subunit (1086 aa).

The segment at 1-64 (MTDRSSNEGV…KTSSFEDELA (64 aa)) is disordered. Positions 29–58 (EITDVKRRRLSERNGYGDKKGSSSKEKTSS) are enriched in basic and acidic residues. The Zn(2+) site is built by cysteine 993, cysteine 996, cysteine 1008, and cysteine 1011. Residues 993-1011 (CLGCKAPIKKGKTALCENC) form a CysA-type zinc finger. 4 residues coordinate [4Fe-4S] cluster: cysteine 1040, cysteine 1043, cysteine 1053, and cysteine 1058. The short motif at 1040 to 1058 (CQRCQGSMHQDVICTSRDC) is the CysB motif element.

The protein belongs to the DNA polymerase type-B family. In terms of assembly, heterotetramer that consist of the pol3, cdc1, cdc27 and cdm1 subunits. The pol3 subunit contains the polymerase active site and most likely the active site for the 3'-5' exonuclease activity. [4Fe-4S] cluster is required as a cofactor.

It localises to the nucleus. It carries out the reaction DNA(n) + a 2'-deoxyribonucleoside 5'-triphosphate = DNA(n+1) + diphosphate. Functionally, catalytic component of DNA polymerase delta (DNA polymerase III) which participates in chromosomal DNA replication. Required during synthesis of the lagging DNA strands at the replication fork, binds at/or near replication origins and moves along DNA with the replication fork. Participates in leading strand synthesis during replication initiation and termination. Has 3'-5' proofreading exonuclease activity that corrects errors arising during DNA replication. In Schizosaccharomyces pombe (strain 972 / ATCC 24843) (Fission yeast), this protein is DNA polymerase delta catalytic subunit (pol3).